The primary structure comprises 303 residues: Lipase chaperone (303 aa).

Residues 7–23 form a helical membrane-spanning segment; the sequence is TLAAACAAWLAWWAWPD.

Belongs to the lipase chaperone family.

Its subcellular location is the cell inner membrane. In terms of biological role, may be involved in the folding of the extracellular lipase during its passage through the periplasm. In Chromobacterium violaceum (strain ATCC 12472 / DSM 30191 / JCM 1249 / CCUG 213 / NBRC 12614 / NCIMB 9131 / NCTC 9757 / MK), this protein is Lipase chaperone (lifO).